The following is a 423-amino-acid chain: GTPase ERA-like, chloroplastic (423 aa).

The N-terminal 60 residues, 1–60 (MELGLALRLVAPPPRLPCRALQPPPMPCFSPCAARRSRIRSSRLERRVGVVVSGGSMASL), are a transit peptide targeting the chloroplast. Positions 124-294 (RSGYVAVLGK…KEWILSKLPL (171 aa)) constitute an Era-type G domain. Residues 132–139 (GKPNVGKS) form a G1 region. A GTP-binding site is contributed by 132-139 (GKPNVGKS). The interval 158-162 (QTTRH) is G2. The tract at residues 179–182 (DTPG) is G3. Residues 179–183 (DTPGV) and 244–247 (NKKD) contribute to the GTP site. The segment at 244 to 247 (NKKD) is G4. The segment at 273–275 (ISA) is G5. In terms of domain architecture, KH type-2 spans 325 to 402 (YRQEIPYACQ…YLEIMVKVKE (78 aa)).

The protein belongs to the TRAFAC class TrmE-Era-EngA-EngB-Septin-like GTPase superfamily. Era GTPase family.

It is found in the plastid. Its subcellular location is the chloroplast stroma. The protein resides in the chloroplast nucleoid. Nuclear genome-encoded probable GTPase involved in ribosome biogenesis in chloroplasts. Plays a role in 16S rRNA maturation in plastids and may contribute to the assembly of the small (30S) ribosomal subunit. This Oryza sativa subsp. japonica (Rice) protein is GTPase ERA-like, chloroplastic.